Consider the following 1521-residue polypeptide: uncharacterized protein (1521 aa).

5 disordered regions span residues 1-20 (MENN…NSNN), 85-124 (TFQS…NNNN), 218-254 (ASSP…SSSS), 431-482 (VLNS…TGIT), and 735-797 (NNNN…HQQQ). 3 stretches are compositionally biased toward low complexity: residues 94–108 (NTSS…QNNP), 219–254 (SSPS…SSSS), and 431–454 (VLNS…NNTS). Residues 455–464 (PAIVTSASIH) are compositionally biased toward polar residues. 2 stretches are compositionally biased toward low complexity: residues 465–482 (NSNG…TGIT) and 735–762 (NNNN…NNIL). Polar residues predominate over residues 763–774 (SNTLTSSLINEP). Over residues 775-788 (NQQHQHQQHQQQNQ) the composition is skewed to low complexity. Residues 853–903 (IVNSQQQQQQQQQQQQQQQQQQQQQQQQQQQQQQQQQQQQQQHNNTQNINN) adopt a coiled-coil conformation. Positions 1398–1453 (QQPLPTSKTSSSSSSTSSEATPYLSSSVPPSIVTSTPSTTPMISSSNPNTSSLPTS) are enriched in low complexity. The segment at 1398–1455 (QQPLPTSKTSSSSSSTSSEATPYLSSSVPPSIVTSTPSTTPMISSSNPNTSSLPTSER) is disordered.

This is an uncharacterized protein from Dictyostelium discoideum (Social amoeba).